Reading from the N-terminus, the 365-residue chain is Serpentine receptor class epsilon-38 (365 aa).

The next 7 helical transmembrane spans lie at 26-46 (GMYLYLLLTEILLYVGTGVII), 65-85 (IMTALFLCQWFEAIAAKLLII), 124-144 (ALVISGFLIWHYAYTMIFGIL), 168-188 (IPVFLITSTHLITLTFSYFVL), 196-216 (LGTSPCFLNSALVVMTFLAVW), 256-276 (LVIVVLCAISVPCALLICLVI), and 285-305 (IFIHIMENFIYLNPVIICSTL).

This sequence belongs to the nematode receptor-like protein sre family.

It is found in the membrane. The polypeptide is Serpentine receptor class epsilon-38 (sre-38) (Caenorhabditis elegans).